Here is a 101-residue protein sequence, read N- to C-terminus: Small ribosomal subunit protein uS14 (101 aa).

This sequence belongs to the universal ribosomal protein uS14 family. In terms of assembly, part of the 30S ribosomal subunit. Contacts proteins S3 and S10.

Binds 16S rRNA, required for the assembly of 30S particles and may also be responsible for determining the conformation of the 16S rRNA at the A site. This chain is Small ribosomal subunit protein uS14, found in Hyphomonas neptunium (strain ATCC 15444).